The primary structure comprises 199 residues: dITP/XTP pyrophosphatase (199 aa).

Substrate is bound at residue S8–K13. Catalysis depends on D69, which acts as the Proton acceptor. Residue D69 participates in Mg(2+) binding. Residues S70, F154–N157, K177, and H182–R183 contribute to the substrate site.

It belongs to the HAM1 NTPase family. In terms of assembly, homodimer. It depends on Mg(2+) as a cofactor.

It carries out the reaction XTP + H2O = XMP + diphosphate + H(+). The enzyme catalyses dITP + H2O = dIMP + diphosphate + H(+). It catalyses the reaction ITP + H2O = IMP + diphosphate + H(+). Its function is as follows. Pyrophosphatase that catalyzes the hydrolysis of nucleoside triphosphates to their monophosphate derivatives, with a high preference for the non-canonical purine nucleotides XTP (xanthosine triphosphate), dITP (deoxyinosine triphosphate) and ITP. Seems to function as a house-cleaning enzyme that removes non-canonical purine nucleotides from the nucleotide pool, thus preventing their incorporation into DNA/RNA and avoiding chromosomal lesions. The chain is dITP/XTP pyrophosphatase from Xanthomonas axonopodis pv. citri (strain 306).